Consider the following 359-residue polypeptide: MGNTLTCCVSPNASPKLGRRAGSAELYCASDIYEAVSGDAVAVAPAVVEPAELDFGEGEGHHLQHISDREMPEDLALESNPSDHPRASTIFLSKSQTDVREKRKSNHLNHVSPGQLTKKYSSCSTIFLDDSTVSQPNLRTTVKCVTLAIYYHIKNRDANRSLDIFDERSHPLTREKVPEEYFKHDPEHKFIYRFVRTLFSAAQLTAECAIVTLVYLERLLTYAEIDICPTNWKRIVLGAILLASKVWDDQAVWNVDYCQILKDITVEDMNEMERHFLELLQFNINVPASVYAKYYFDLRSLADDNNLNFLFAPLSKERAQNLEAISRLCEDKDLCRAAMRRSFSADNFIGIQRSKAILS.

Residues serine 67, serine 105, and serine 112 each carry the phosphoserine modification. A Cyclin N-terminal domain is found at 145-267; that stretch reads VTLAIYYHIK…CQILKDITVE (123 aa). Serine 344 is modified (phosphoserine).

Belongs to the cyclin family. Cyclin Y subfamily. Interacts with CDK16; this interaction mutually increases the stability of CDK16 and CCNYL1 and increases the kinase activity of CDK16.

It is found in the cell membrane. Functionally, key regulator of Wnt signaling implicated in various biological processes including male fertility, embryonic neurogenesis and cortex development. Activates the cyclin-dependent kinase CDK16, and promotes sperm maturation. In Homo sapiens (Human), this protein is Cyclin-Y-like protein 1.